The primary structure comprises 211 residues: uncharacterized protein (211 aa).

An N-terminal signal peptide occupies residues M1–V27.

This is an uncharacterized protein from Archaeoglobus fulgidus (strain ATCC 49558 / DSM 4304 / JCM 9628 / NBRC 100126 / VC-16).